The following is a 439-amino-acid chain: C4-dicarboxylate transport protein 1 (439 aa).

6 consecutive transmembrane segments (helical) span residues 18–38 (VLYI…WLWP), 56–76 (LIKM…IAHV), 91–111 (IYFE…ANVI), 157–177 (GEIL…MSLG), 193–213 (AIFG…FGAM), and 231–251 (LIAT…GIIA).

Belongs to the dicarboxylate/amino acid:cation symporter (DAACS) (TC 2.A.23) family.

The protein resides in the cell inner membrane. Its function is as follows. Responsible for the transport of dicarboxylates such as succinate, fumarate, and malate from the periplasm across the membrane. The chain is C4-dicarboxylate transport protein 1 from Bradyrhizobium sp. (strain ORS 278).